Consider the following 175-residue polypeptide: Alpha-crystallin B chain (175 aa).

Met-1 bears the N-acetylmethionine mark. Phosphoserine is present on Ser-19. A glycan (O-linked (GlcNAc) serine) is linked at Ser-41. Phosphoserine occurs at positions 45 and 59. Residues 56 to 164 (RAPSWIDTGL…PERTIPITRE (109 aa)) enclose the sHSP domain. His-83 lines the Zn(2+) pocket. The residue at position 92 (Lys-92) is an N6-acetyllysine. 4 residues coordinate Zn(2+): His-104, Glu-106, His-111, and His-119. The tract at residues 139–175 (SDGVLTMNGPRKQASGPERTIPITREEKPAVTAAPKK) is disordered. At Lys-166 the chain carries N6-acetyllysine. Thr-170 carries an O-linked (GlcNAc) threonine glycan.

The protein belongs to the small heat shock protein (HSP20) family. Heteromer composed of three CRYAA and one CRYAB subunits. Aggregates with homologous proteins, including the small heat shock protein HSPB1, to form large heteromeric complexes. Inter-subunit bridging via zinc ions enhances stability, which is crucial as there is no protein turn over in the lens. Interacts with HSPBAP1 and TTN/titin. Interacts with TMEM109; in the cellular response to DNA damage. Interacts with DES; binds rapidly during early stages of DES filament assembly and a reduced binding seen in the later stages. Interacts with ATP6V1A and with MTOR, forming a ternary complex.

The protein resides in the cytoplasm. Its subcellular location is the nucleus. It localises to the secreted. The protein localises to the lysosome. May contribute to the transparency and refractive index of the lens. Has chaperone-like activity, preventing aggregation of various proteins under a wide range of stress conditions. In lens epithelial cells, stabilizes the ATP6V1A protein, preventing its degradation by the proteasome. This Ovis aries (Sheep) protein is Alpha-crystallin B chain (CRYAB).